Here is a 215-residue protein sequence, read N- to C-terminus: Pentapeptide repeat protein QnrB4 (215 aa).

Pentapeptide repeat domains are found at residues 25–104 (TFFN…SFMN) and 117–191 (ITNT…RGVD).

The protein belongs to the pentapeptide repeat protein family.

Its function is as follows. Probably plays a role in resistance to quinolone antibiotics. Only inhibits ATP-dependent DNA supercoiling by E.coli gyrase at high concentration (30 uM). Protects E.coli gyrase supercoiling activity from inhibition by fluoroquinolones (ciprofloxacin) at 0.1 uM, does not protect M.tuberculosis gyrase activity. The sequence is that of Pentapeptide repeat protein QnrB4 from Escherichia coli.